Here is a 344-residue protein sequence, read N- to C-terminus: 4-hydroxy-3-methylbut-2-en-1-yl diphosphate synthase (flavodoxin) (344 aa).

Cysteine 253, cysteine 256, cysteine 288, and glutamate 295 together coordinate [4Fe-4S] cluster.

This sequence belongs to the IspG family. Requires [4Fe-4S] cluster as cofactor.

It catalyses the reaction (2E)-4-hydroxy-3-methylbut-2-enyl diphosphate + oxidized [flavodoxin] + H2O + 2 H(+) = 2-C-methyl-D-erythritol 2,4-cyclic diphosphate + reduced [flavodoxin]. It functions in the pathway isoprenoid biosynthesis; isopentenyl diphosphate biosynthesis via DXP pathway; isopentenyl diphosphate from 1-deoxy-D-xylulose 5-phosphate: step 5/6. In terms of biological role, converts 2C-methyl-D-erythritol 2,4-cyclodiphosphate (ME-2,4cPP) into 1-hydroxy-2-methyl-2-(E)-butenyl 4-diphosphate. In Thermotoga petrophila (strain ATCC BAA-488 / DSM 13995 / JCM 10881 / RKU-1), this protein is 4-hydroxy-3-methylbut-2-en-1-yl diphosphate synthase (flavodoxin).